The following is a 704-amino-acid chain: Ion-translocating oxidoreductase complex subunit C (704 aa).

4Fe-4S ferredoxin-type domains follow at residues methionine 368–tyrosine 397 and lysine 407–phenylalanine 436. Residues cysteine 377, cysteine 380, cysteine 383, cysteine 387, cysteine 416, cysteine 419, cysteine 422, and cysteine 426 each coordinate [4Fe-4S] cluster. Residues glutamine 534–alanine 682 form a disordered region.

The protein belongs to the 4Fe4S bacterial-type ferredoxin family. RnfC subfamily. As to quaternary structure, the complex is composed of six subunits: RsxA, RsxB, RsxC, RsxD, RsxE and RsxG. [4Fe-4S] cluster is required as a cofactor.

The protein resides in the cell inner membrane. Part of a membrane-bound complex that couples electron transfer with translocation of ions across the membrane. Required to maintain the reduced state of SoxR. The sequence is that of Ion-translocating oxidoreductase complex subunit C from Salmonella enteritidis PT4 (strain P125109).